The sequence spans 267 residues: Phosphoinositide-3-kinase-interacting protein 1 (267 aa).

The first 21 residues, 1–21 (MLLAWVHTFLLSNMLLAEAYG), serve as a signal peptide directing secretion. The Extracellular segment spans residues 22-172 (SGGCFWDNGH…NSKEKKDLGT (151 aa)). In terms of domain architecture, Kringle spans 24–101 (GCFWDNGHLY…EKRPCEDLRC (78 aa)). Disulfide bonds link cysteine 25-cysteine 101, cysteine 46-cysteine 82, and cysteine 70-cysteine 96. Over residues 91–101 (PEKRPCEDLRC) the composition is skewed to basic and acidic residues. Residues 91–122 (PEKRPCEDLRCPETTSQAPPPPPPSSTTELEE) form a disordered region. The chain crosses the membrane as a helical span at residues 173 to 193 (LGYVLGVTMTVIIIAIGVGIV). Topologically, residues 194–267 (LGYTYKRGKD…LTDQAGTPGA (74 aa)) are cytoplasmic.

It localises to the cell membrane. In terms of biological role, negative regulator of hepatic phosphatidylinositol 3-kinase (PI3K) activity. The protein is Phosphoinositide-3-kinase-interacting protein 1 (Pik3ip1) of Rattus norvegicus (Rat).